Reading from the N-terminus, the 552-residue chain is ATP synthase subunit alpha (552 aa).

G173–S180 is a binding site for ATP. The segment at K509 to G552 is disordered.

It belongs to the ATPase alpha/beta chains family. In terms of assembly, F-type ATPases have 2 components, CF(1) - the catalytic core - and CF(0) - the membrane proton channel. CF(1) has five subunits: alpha(3), beta(3), gamma(1), delta(1), epsilon(1). CF(0) has three main subunits: a(1), b(2) and c(9-12). The alpha and beta chains form an alternating ring which encloses part of the gamma chain. CF(1) is attached to CF(0) by a central stalk formed by the gamma and epsilon chains, while a peripheral stalk is formed by the delta and b chains.

It is found in the cell membrane. It catalyses the reaction ATP + H2O + 4 H(+)(in) = ADP + phosphate + 5 H(+)(out). In terms of biological role, produces ATP from ADP in the presence of a proton gradient across the membrane. The alpha chain is a regulatory subunit. This Kineococcus radiotolerans (strain ATCC BAA-149 / DSM 14245 / SRS30216) protein is ATP synthase subunit alpha.